Consider the following 429-residue polypeptide: Enolase (429 aa).

Gln164 provides a ligand contact to (2R)-2-phosphoglycerate. Glu206 functions as the Proton donor in the catalytic mechanism. The Mg(2+) site is built by Asp243, Glu286, and Asp313. 4 residues coordinate (2R)-2-phosphoglycerate: Lys338, Arg367, Ser368, and Lys389. Lys338 functions as the Proton acceptor in the catalytic mechanism.

The protein belongs to the enolase family. It depends on Mg(2+) as a cofactor.

It is found in the cytoplasm. The protein localises to the secreted. Its subcellular location is the cell surface. The catalysed reaction is (2R)-2-phosphoglycerate = phosphoenolpyruvate + H2O. It participates in carbohydrate degradation; glycolysis; pyruvate from D-glyceraldehyde 3-phosphate: step 4/5. Catalyzes the reversible conversion of 2-phosphoglycerate (2-PG) into phosphoenolpyruvate (PEP). It is essential for the degradation of carbohydrates via glycolysis. This chain is Enolase, found in Thermosipho africanus (strain TCF52B).